The chain runs to 631 residues: Probable potassium transport system protein Kup (631 aa).

Helical transmembrane passes span 17–37 (IGLL…SPLY), 56–76 (ILGV…FKYM), 109–129 (MMMV…SMIT), 147–167 (GLDH…FLIQ), 174–194 (IGVL…ALGV), 215–235 (FFII…LALT), 256–276 (WFIL…ALVL), 288–308 (LLAP…ATII), 346–366 (IYIG…VIGF), 378–398 (VAVT…MLML), 403–423 (PLLA…FFAA), and 428–448 (IFQG…LMTT).

It belongs to the HAK/KUP transporter (TC 2.A.72) family.

It localises to the cell inner membrane. The catalysed reaction is K(+)(in) + H(+)(in) = K(+)(out) + H(+)(out). Its function is as follows. Transport of potassium into the cell. Likely operates as a K(+):H(+) symporter. This chain is Probable potassium transport system protein Kup, found in Pseudomonas savastanoi pv. phaseolicola (strain 1448A / Race 6) (Pseudomonas syringae pv. phaseolicola (strain 1448A / Race 6)).